The primary structure comprises 106 residues: Toxin-like structure LSTX-D4 (106 aa).

The N-terminal stretch at 1–20 (MMKVLVVVALLVTLISYSSS) is a signal peptide. The propeptide occupies 21–41 (EGIGDLEADELLSLMANEQTR). 4 cysteine pairs are disulfide-bonded: C45–C60, C52–C69, C59–C85, and C71–C83.

It belongs to the neurotoxin 19 (CSTX) family. 02 (D7) subfamily. In terms of tissue distribution, expressed by the venom gland.

It is found in the secreted. The sequence is that of Toxin-like structure LSTX-D4 from Lycosa singoriensis (Wolf spider).